The primary structure comprises 153 residues: MAELPHRIIKETQRLLAEPVPGIKAEPDESNARYFHVVIAGESKDSPFEGGTFKRELLLAEEYPMAAPKVRFMTKIYHPNVDKLERISLDILKDKWSPALQIRTVLLSIQALLNAPNPDDPLANDVVEQWKTNEAQAIETARAWTRLYAMNSI.

Residues 3 to 150 (ELPHRIIKET…ARAWTRLYAM (148 aa)) enclose the UBC core domain. Residue K83 is modified to N6-acetyllysine.

The protein belongs to the ubiquitin-conjugating enzyme family. Expressed in epididymis (at protein level).

The chain is Putative ubiquitin-conjugating enzyme E2 N-like (UBE2NL) from Homo sapiens (Human).